The primary structure comprises 1492 residues: DNA-directed RNA polymerase subunit beta' (1492 aa).

The Zn(2+) site is built by Cys67, Cys69, Cys82, and Cys85. Mg(2+)-binding residues include Asp499, Asp501, and Asp503. 4 residues coordinate Zn(2+): Cys867, Cys943, Cys950, and Cys953.

This sequence belongs to the RNA polymerase beta' chain family. In terms of assembly, the RNAP catalytic core consists of 2 alpha, 1 beta, 1 beta' and 1 omega subunit. When a sigma factor is associated with the core the holoenzyme is formed, which can initiate transcription. Mg(2+) serves as cofactor. Zn(2+) is required as a cofactor.

It catalyses the reaction RNA(n) + a ribonucleoside 5'-triphosphate = RNA(n+1) + diphosphate. Its function is as follows. DNA-dependent RNA polymerase catalyzes the transcription of DNA into RNA using the four ribonucleoside triphosphates as substrates. The polypeptide is DNA-directed RNA polymerase subunit beta' (Chlorobium phaeobacteroides (strain DSM 266 / SMG 266 / 2430)).